Reading from the N-terminus, the 147-residue chain is MFDISFSEILVIAAVALIVIGPERLPKVARTLGHVFGWAQRYVNDVKSDIQREIELDELKKWKASVEETGRSIENSVHTELDKFRETVEAGAEASAMPPPTTAPAGESSPPQNSSPAPAEPAPPPVQSTKNSDPAGPGVNRERETAE.

The chain crosses the membrane as a helical span at residues 1–21; sequence MFDISFSEILVIAAVALIVIG. Positions 67–88 are enriched in basic and acidic residues; it reads EETGRSIENSVHTELDKFRETV. Residues 67 to 147 are disordered; sequence EETGRSIENS…GVNRERETAE (81 aa). A compositionally biased stretch (low complexity) spans 103–117; that stretch reads APAGESSPPQNSSPA.

The protein belongs to the TatB family. The Tat system comprises two distinct complexes: a TatABC complex, containing multiple copies of TatA, TatB and TatC subunits, and a separate TatA complex, containing only TatA subunits. Substrates initially bind to the TatABC complex, which probably triggers association of the separate TatA complex to form the active translocon.

It is found in the cell inner membrane. Its function is as follows. Part of the twin-arginine translocation (Tat) system that transports large folded proteins containing a characteristic twin-arginine motif in their signal peptide across membranes. Together with TatC, TatB is part of a receptor directly interacting with Tat signal peptides. TatB may form an oligomeric binding site that transiently accommodates folded Tat precursor proteins before their translocation. This is Sec-independent protein translocase protein TatB from Nitrosospira multiformis (strain ATCC 25196 / NCIMB 11849 / C 71).